A 937-amino-acid polypeptide reads, in one-letter code: Ubiquitin carboxyl-terminal hydrolase 37 (937 aa).

Positions 38 to 40 (RDN) match the KEN box 1 motif. 2 consecutive short sequence motifs (D-box) follow at residues 76 to 84 (RMTLTLKDS) and 101 to 110 (KEYLETVKLG). Residues 132 to 149 (TAQNDSGLSPSDKQSAPR) show a composition bias toward polar residues. Disordered stretches follow at residues 132–216 (TAQN…KAIT) and 232–258 (QSEENRASAPHTPAPLQPTSFYGSRTG). Residues 151–161 (SSLDSREDSTP) show a composition bias toward basic and acidic residues. The D-box 3 motif lies at 162–170 (RKPLGSPSR). Positions 204–206 (KEN) match the KEN box 2 motif. Residues 322–911 (QGFSNLGNTC…SGYIFFYMHK (590 aa)) enclose the USP domain. C331 functions as the Nucleophile in the catalytic mechanism. Residues 609–625 (NSSTLRRASQRPESSGS) are compositionally biased toward polar residues. Disordered regions lie at residues 609 to 632 (NSSTLRRASQRPESSGSVLCDSDS) and 688 to 710 (TSLCAGPDEEPSSSPDTGFGDAD). The region spanning 672-691 (NDEEMLAAVLEMSRHDTSLC) is the UIM 1 domain. The short motif at 742-744 (KEN) is the KEN box 3 element. UIM domains are found at residues 766 to 785 (REEQELQQALAQSLQEQEAR) and 788 to 807 (REDDDLKRATELSLQEFNNS). The active-site Proton acceptor is the H866.

The protein belongs to the peptidase C19 family.

The catalysed reaction is Thiol-dependent hydrolysis of ester, thioester, amide, peptide and isopeptide bonds formed by the C-terminal Gly of ubiquitin (a 76-residue protein attached to proteins as an intracellular targeting signal).. Deubiquitinase that antagonizes the anaphase-promoting complex (APC/C) during G1/S transition by mediating deubiquitination of APC/C target proteins, thereby promoting S phase entry. Specifically mediates deubiquitination of 'Lys-11'-linked polyubiquitin chains, a specific ubiquitin-linkage type mediated by the APC/C complex. In Danio rerio (Zebrafish), this protein is Ubiquitin carboxyl-terminal hydrolase 37 (usp37).